The sequence spans 206 residues: Urease accessory protein UreG (206 aa).

G14–T21 provides a ligand contact to GTP.

The protein belongs to the SIMIBI class G3E GTPase family. UreG subfamily. In terms of assembly, homodimer. UreD, UreF and UreG form a complex that acts as a GTP-hydrolysis-dependent molecular chaperone, activating the urease apoprotein by helping to assemble the nickel containing metallocenter of UreC. The UreE protein probably delivers the nickel.

It is found in the cytoplasm. Its function is as follows. Facilitates the functional incorporation of the urease nickel metallocenter. This process requires GTP hydrolysis, probably effectuated by UreG. This Methylocella silvestris (strain DSM 15510 / CIP 108128 / LMG 27833 / NCIMB 13906 / BL2) protein is Urease accessory protein UreG.